A 491-amino-acid chain; its full sequence is Ketol-acid reductoisomerase (NADP(+)) (491 aa).

The region spanning 15 to 208 (AQLGKCRFMG…GGHRAGVLES (194 aa)) is the KARI N-terminal Rossmann domain. NADP(+) contacts are provided by residues 45–48 (CGAQ), Arg68, Arg76, Ser78, and 108–110 (DKQ). His132 is an active-site residue. Gly158 contributes to the NADP(+) binding site. KARI C-terminal knotted domains lie at 209 to 344 (SFVA…TAPQ) and 345 to 484 (YEGK…MTDM). Mg(2+)-binding residues include Asp217, Glu221, Glu389, and Glu393. Ser414 is a substrate binding site.

The protein belongs to the ketol-acid reductoisomerase family. It depends on Mg(2+) as a cofactor.

The catalysed reaction is (2R)-2,3-dihydroxy-3-methylbutanoate + NADP(+) = (2S)-2-acetolactate + NADPH + H(+). It carries out the reaction (2R,3R)-2,3-dihydroxy-3-methylpentanoate + NADP(+) = (S)-2-ethyl-2-hydroxy-3-oxobutanoate + NADPH + H(+). It participates in amino-acid biosynthesis; L-isoleucine biosynthesis; L-isoleucine from 2-oxobutanoate: step 2/4. Its pathway is amino-acid biosynthesis; L-valine biosynthesis; L-valine from pyruvate: step 2/4. In terms of biological role, involved in the biosynthesis of branched-chain amino acids (BCAA). Catalyzes an alkyl-migration followed by a ketol-acid reduction of (S)-2-acetolactate (S2AL) to yield (R)-2,3-dihydroxy-isovalerate. In the isomerase reaction, S2AL is rearranged via a Mg-dependent methyl migration to produce 3-hydroxy-3-methyl-2-ketobutyrate (HMKB). In the reductase reaction, this 2-ketoacid undergoes a metal-dependent reduction by NADPH to yield (R)-2,3-dihydroxy-isovalerate. This is Ketol-acid reductoisomerase (NADP(+)) from Escherichia coli (strain UTI89 / UPEC).